The primary structure comprises 200 residues: Small ribosomal subunit protein eS8B (200 aa).

The tract at residues 1–41 (MGITRDSRHKRSATGAKRAQYRKKRKFELGRQPSNTRIGPK) is disordered. Phosphoserine occurs at positions 62 and 99. The segment at 124 to 145 (KGKKATATPTPKSKHVQRKHSA) is disordered. The span at 135–145 (KSKHVQRKHSA) shows a compositional bias: basic residues. A phosphoserine mark is found at Ser-150, Ser-154, and Ser-171.

Belongs to the eukaryotic ribosomal protein eS8 family. Component of the small ribosomal subunit (SSU). Mature yeast ribosomes consist of a small (40S) and a large (60S) subunit. The 40S small subunit contains 1 molecule of ribosomal RNA (18S rRNA) and at least 33 different proteins. The large 60S subunit contains 3 rRNA molecules (25S, 5.8S and 5S rRNA) and at least 46 different proteins.

Its subcellular location is the cytoplasm. Functionally, component of the ribosome, a large ribonucleoprotein complex responsible for the synthesis of proteins in the cell. The small ribosomal subunit (SSU) binds messenger RNAs (mRNAs) and translates the encoded message by selecting cognate aminoacyl-transfer RNA (tRNA) molecules. The large subunit (LSU) contains the ribosomal catalytic site termed the peptidyl transferase center (PTC), which catalyzes the formation of peptide bonds, thereby polymerizing the amino acids delivered by tRNAs into a polypeptide chain. The nascent polypeptides leave the ribosome through a tunnel in the LSU and interact with protein factors that function in enzymatic processing, targeting, and the membrane insertion of nascent chains at the exit of the ribosomal tunnel. The sequence is that of Small ribosomal subunit protein eS8B (rps802) from Schizosaccharomyces pombe (strain 972 / ATCC 24843) (Fission yeast).